A 166-amino-acid chain; its full sequence is CDP-archaeol synthase (166 aa).

4 helical membrane passes run 42–62 (LVLG…VQDA), 73–93 (VLSV…KSFV), 103–123 (AAWP…LLLI), and 128–148 (FAAV…TPLL).

Belongs to the CDP-archaeol synthase family. Mg(2+) serves as cofactor.

The protein localises to the cell membrane. It catalyses the reaction 2,3-bis-O-(geranylgeranyl)-sn-glycerol 1-phosphate + CTP + H(+) = CDP-2,3-bis-O-(geranylgeranyl)-sn-glycerol + diphosphate. It participates in membrane lipid metabolism; glycerophospholipid metabolism. Catalyzes the formation of CDP-2,3-bis-(O-geranylgeranyl)-sn-glycerol (CDP-archaeol) from 2,3-bis-(O-geranylgeranyl)-sn-glycerol 1-phosphate (DGGGP) and CTP. This reaction is the third ether-bond-formation step in the biosynthesis of archaeal membrane lipids. The polypeptide is CDP-archaeol synthase (Methanosphaerula palustris (strain ATCC BAA-1556 / DSM 19958 / E1-9c)).